We begin with the raw amino-acid sequence, 224 residues long: EF-hand calcium-binding domain-containing protein 1 (224 aa).

An N-terminal signal peptide occupies residues 1 to 21; sequence MKVSLLLLALVLVCLVQGSES. The EF-hand domain maps to 115–150; sequence IAHPDFMKAYSIADVDGDGELSPKEFYNGPYVFEMD. Ca(2+) contacts are provided by Asp-128, Asp-130, Asp-132, Glu-134, and Glu-139.

As to expression, component of the acid-soluble organic matrix of calcified layers of the shell (at protein level).

Its subcellular location is the secreted. The chain is EF-hand calcium-binding domain-containing protein 1 from Lottia gigantea (Giant owl limpet).